Here is a 105-residue protein sequence, read N- to C-terminus: Protein Rev (105 aa).

Serine 5 is modified (phosphoserine; by host CK2). Residues 18–26 (IIKILYQSN) are homomultimerization. The segment covering 24 to 35 (QSNPYPDSSQGT) has biased composition (polar residues). Disordered regions lie at residues 24-49 (QSNP…WRAR) and 65-105 (LGGP…ATTE). The Nuclear localization signal and RNA-binding (RRE) motif lies at 35–51 (TRQARRNRRRRWRARQR). Over residues 37 to 49 (QARRNRRRRWRAR) the composition is skewed to basic residues. The Nuclear export signal and binding to XPO1 signature appears at 74-85 (LPLPPLGRLTLD). Residues 95 to 105 (TESQQGTATTE) show a composition bias toward polar residues.

Belongs to the HIV-1 REV protein family. In terms of assembly, homomultimer; when bound to the RRE. Multimeric assembly is essential for activity and may involve XPO1. Binds to human KPNB1, XPO1, TNPO1, RANBP5 and IPO7. Interacts with the viral Integrase. Interacts with human KHDRBS1. Interacts with human NAP1; this interaction decreases Rev multimerization and stimulates its activity. Interacts with human DEAD-box helicases DDX3 and DDX24; these interactions may serve for viral RNA export to the cytoplasm and packaging, respectively. Interacts with human PSIP1; this interaction may inhibit HIV-1 DNA integration by promoting dissociation of the Integrase-LEDGF/p75 complex. Post-translationally, asymmetrically arginine dimethylated at one site by host PRMT6. Methylation impairs the RNA-binding activity and export of viral RNA from the nucleus to the cytoplasm. In terms of processing, phosphorylated by protein kinase CK2. Presence of, and maybe binding to the N-terminus of the regulatory beta subunit of CK2 is necessary for CK2-mediated Rev's phosphorylation.

The protein localises to the host nucleus. Its subcellular location is the host nucleolus. The protein resides in the host cytoplasm. Its function is as follows. Escorts unspliced or incompletely spliced viral pre-mRNAs (late transcripts) out of the nucleus of infected cells. These pre-mRNAs carry a recognition sequence called Rev responsive element (RRE) located in the env gene, that is not present in fully spliced viral mRNAs (early transcripts). This function is essential since most viral proteins are translated from unspliced or partially spliced pre-mRNAs which cannot exit the nucleus by the pathway used by fully processed cellular mRNAs. Rev itself is translated from a fully spliced mRNA that readily exits the nucleus. Rev's nuclear localization signal (NLS) binds directly to KPNB1/Importin beta-1 without previous binding to KPNA1/Importin alpha-1. KPNB1 binds to the GDP bound form of RAN (Ran-GDP) and targets Rev to the nucleus. In the nucleus, the conversion from Ran-GDP to Ran-GTP dissociates Rev from KPNB1 and allows Rev's binding to the RRE in viral pre-mRNAs. Rev multimerization on the RRE via cooperative assembly exposes its nuclear export signal (NES) to the surface. Rev can then form a complex with XPO1/CRM1 and Ran-GTP, leading to nuclear export of the complex. Conversion from Ran-GTP to Ran-GDP mediates dissociation of the Rev/RRE/XPO1/RAN complex, so that Rev can return to the nucleus for a subsequent round of export. Beside KPNB1, also seems to interact with TNPO1/Transportin-1, RANBP5/IPO5 and IPO7/RANBP7 for nuclear import. The nucleoporin-like HRB/RIP is an essential cofactor that probably indirectly interacts with Rev to release HIV RNAs from the perinuclear region to the cytoplasm. This is Protein Rev from Homo sapiens (Human).